The sequence spans 648 residues: p-hydroxybenzoic acid efflux pump subunit AaeB (648 aa).

The next 11 helical transmembrane spans lie at 11–31, 41–61, 65–87, 91–110, 125–145, 150–170, 369–389, 406–426, 430–450, 458–478, and 481–501; these read FACK…YFGL, AALV…SGAI, GWLR…MLLI, LLMI…LSSL, TALI…QLAL, EIVL…PRSV, LFWL…IAVV, FLMG…LILP, QSLV…GMAV, MGTL…GFPI, and FVDS…VLLV.

Belongs to the aromatic acid exporter ArAE (TC 2.A.85) family.

The protein localises to the cell inner membrane. Functionally, forms an efflux pump with AaeA. Could function as a metabolic relief valve, allowing to eliminate certain compounds when they accumulate to high levels in the cell. The sequence is that of p-hydroxybenzoic acid efflux pump subunit AaeB from Edwardsiella ictaluri (strain 93-146).